The primary structure comprises 275 residues: NH(3)-dependent NAD(+) synthetase (275 aa).

50 to 57 (GISGGVDS) is a binding site for ATP. Asp56 serves as a coordination point for Mg(2+). Arg147 contributes to the deamido-NAD(+) binding site. Thr167 provides a ligand contact to ATP. Glu172 contacts Mg(2+). 2 residues coordinate deamido-NAD(+): Lys180 and Asp187. ATP-binding residues include Lys196 and Thr218. 267-268 (HK) lines the deamido-NAD(+) pocket.

The protein belongs to the NAD synthetase family. In terms of assembly, homodimer.

It catalyses the reaction deamido-NAD(+) + NH4(+) + ATP = AMP + diphosphate + NAD(+) + H(+). Its pathway is cofactor biosynthesis; NAD(+) biosynthesis; NAD(+) from deamido-NAD(+) (ammonia route): step 1/1. Its function is as follows. Catalyzes the ATP-dependent amidation of deamido-NAD to form NAD. Uses ammonia as a nitrogen source. This chain is NH(3)-dependent NAD(+) synthetase, found in Pseudomonas aeruginosa (strain UCBPP-PA14).